A 647-amino-acid polypeptide reads, in one-letter code: Threonine--tRNA ligase (647 aa).

The 61-residue stretch at 1-61 (MIKITFPDGA…EEDGSIEIVT (61 aa)) folds into the TGS domain. The catalytic stretch occupies residues 240–538 (DHRKLGKELD…LIETYKGAFP (299 aa)). Zn(2+) contacts are provided by Cys334, His385, and His515.

It belongs to the class-II aminoacyl-tRNA synthetase family. In terms of assembly, homodimer. Zn(2+) serves as cofactor.

The protein resides in the cytoplasm. It catalyses the reaction tRNA(Thr) + L-threonine + ATP = L-threonyl-tRNA(Thr) + AMP + diphosphate + H(+). Functionally, catalyzes the attachment of threonine to tRNA(Thr) in a two-step reaction: L-threonine is first activated by ATP to form Thr-AMP and then transferred to the acceptor end of tRNA(Thr). Also edits incorrectly charged L-seryl-tRNA(Thr). This Streptococcus pyogenes serotype M4 (strain MGAS10750) protein is Threonine--tRNA ligase.